We begin with the raw amino-acid sequence, 1860 residues long: Golgi-specific brefeldin A-resistance guanine nucleotide exchange factor 1 (1860 aa).

The tract at residues 1–211 is DCB; DCB:DCB domain and DCB:HUS domain interaction; it reads MVDKNIYIIQ…EPKNYVGTNM (211 aa). Residues 1 to 381 are interaction with RAB1B; that stretch reads MVDKNIYIIQ…SVHDMDYVNP (381 aa). Disordered stretches follow at residues 215–266 and 281–372; these read KMRA…GGMP and AASA…DSAS. Positions 227-241 are enriched in basic residues; that stretch reads WKKQKRSPRPPRHMT. 3 stretches are compositionally biased toward polar residues: residues 250–262, 290–301, and 335–351; these read PTPN…SNLT, TDSGLEFSSQTT, and DLQQ…SASV. A phosphoserine mark is found at Ser350 and Ser353. Thr508 is modified (phosphothreonine). Residues 531–551 are HUS; DCB:HUS domain interaction; it reads RIPSFVTELYINYDCDYYCSN. Residues 620 to 631 are compositionally biased toward basic and acidic residues; the sequence is TREASNTERTAS. Residues 620-666 form a disordered region; the sequence is TREASNTERTASDGKAVGMASDIPGLHLPGGGRLPPEHGKSGCSDLE. Ser663 carries the phosphoserine modification. Residues 693 to 883 enclose the SEC7 domain; it reads ELIEIKNKKK…EDMYHAIKNE (191 aa). Residues 887-1371 are phosphatidylinositol-phosphate binding; required for translocation to the leading edge and for ARF1 activation upon GPCR signaling; the sequence is MPEEQTGLVR…PSRPGPSPLI (485 aa). The span at 1285–1297 shows a compositional bias: low complexity; the sequence is QATARADAPDAGA. The disordered stretch occupies residues 1285–1336; it reads QATARADAPDAGAQSDSELPSYHQNDVSLDRGYTSDSEVYTDHGRPGKIHRS. Residues 1298 to 1311 show a composition bias toward polar residues; the sequence is QSDSELPSYHQNDV. Ser1299 is modified (phosphoserine). Phosphotyrosine is present on Tyr1317. Phosphoserine is present on residues Ser1319, Ser1321, and Ser1336. Thr1338 carries the phosphothreonine; by AMPK modification. Disordered stretches follow at residues 1351-1371, 1431-1484, and 1726-1809; these read GKDD…SPLI, CKSQ…DEGV, and PMPM…QPPL. Positions 1433–1447 are enriched in basic and acidic residues; that stretch reads SQEKRGKSHKYDSKG. A compositionally biased stretch (polar residues) spans 1465–1474; that stretch reads TSSQHASRGG. Phosphoserine occurs at positions 1476, 1774, and 1785. The span at 1775–1792 shows a compositional bias: low complexity; it reads PRAASSSSPGSPVASSPS.

Can form homodimers and probably homotetramers. Interacts with COPG1; the interaction is independent of ARF1 activation. Interacts with ARF1, ARF3, ARF4 and ARF5. Interacts with RAB1B (GTP-bound form); required for GBF1 membrane association. Interacts with GGA1, GGA2 and GGA3. Interacts with USO1. Interacts (via SEC7 domain) with PNPLA2 (via C-terminus); the interaction is direct. Interacts with ARMH3. In terms of assembly, (Microbial infection) Interacts with poliovirus protein 3A. In terms of processing, AMPK-mediated phosphorylation at Thr-1338 is induced by 2-deoxyglucose (2-DG) and AICA ribonucleotide, and occurs during mitosis leading to membrane disassociation and inactivation of ARF1 during mitosis. As to expression, ubiquitous.

Its subcellular location is the golgi apparatus. It localises to the cis-Golgi network. The protein resides in the endoplasmic reticulum-Golgi intermediate compartment. It is found in the trans-Golgi network. The protein localises to the cytoplasm. Its subcellular location is the lipid droplet. It localises to the membrane. Its activity is regulated as follows. Inhibited by brefeldin A (BFA). Inhibited by golgicide A (GCA). Its function is as follows. Guanine-nucleotide exchange factor (GEF) for members of the Arf family of small GTPases involved in trafficking in the early secretory pathway; its GEF activity initiates the coating of nascent vesicles via the localized generation of activated ARFs through replacement of GDP with GTP. Recruitment to cis-Golgi membranes requires membrane association of Arf-GDP and can be regulated by ARF1, ARF3, ARF4 and ARF5. Involved in the recruitment of the COPI coat complex to the endoplasmic reticulum exit sites (ERES), and the endoplasmic reticulum-Golgi intermediate (ERGIC) and cis-Golgi compartments which implicates ARF1 activation. Involved in COPI vesicle-dependent retrograde transport from the ERGIC and cis-Golgi compartments to the endoplasmic reticulum (ER). Involved in the trans-Golgi network recruitment of GGA1, GGA2, GGA3, BIG1, BIG2, and the AP-1 adaptor protein complex related to chlathrin-dependent transport; the function requires its GEF activity (probably at least in part on ARF4 and ARF5). Has GEF activity towards ARF1. Has in vitro GEF activity towards ARF5. Involved in the processing of PSAP. Required for the assembly of the Golgi apparatus. The AMPK-phosphorylated form is involved in Golgi disassembly during mitotis and under stress conditions. May be involved in the COPI vesicle-dependent recruitment of PNPLA2 to lipid droplets; however, this function is under debate. In neutrophils, involved in G protein-coupled receptor (GPCR)-mediated chemotaxis und superoxide production. Proposed to be recruited by phosphatidylinositol-phosphates generated upon GPCR stimulation to the leading edge where it recruits and activates ARF1, and is involved in recruitment of GIT2 and the NADPH oxidase complex. Plays a role in maintaining mitochondrial morphology. This chain is Golgi-specific brefeldin A-resistance guanine nucleotide exchange factor 1 (GBF1), found in Homo sapiens (Human).